We begin with the raw amino-acid sequence, 526 residues long: Protein DETOXIFICATION 43 (526 aa).

Residues 1 to 36 (MTETGDDLATVKKPIPFLVIFKDLRHVFSRDTTGRE) are Cytoplasmic-facing. Residues 37–57 (ILGIAFPAALALAADPIASLI) form a helical membrane-spanning segment. Residues 58–59 (DT) are Extracellular-facing. The helical transmembrane segment at 60–80 (AFVGRLGAVQLAAVGVSIAIF) threads the bilayer. Over 81–170 (NQASRITIFP…NKKEKRTIRT (90 aa)) the chain is Cytoplasmic. A disordered region spans residues 133–166 (ISSPTSNDTNQPQQPPAPDTKSNSGNKSNKKEKR). The span at 134–144 (SSPTSNDTNQP) shows a compositional bias: polar residues. A helical membrane pass occupies residues 171–191 (ASTAMILGLILGLVQAIFLIF). Residues 192-215 (SSKLLLGVMGVKPNSPMLSPAHKY) lie on the Extracellular side of the membrane. A helical membrane pass occupies residues 216-236 (LSIRALGAPALLLSLAMQGIF). At 237–244 (RGFKDTKT) the chain is on the cytoplasmic side. The chain crosses the membrane as a helical span at residues 245-267 (PLFATVVADVINIVLDPIFIFVL). At 268 to 270 (RLG) the chain is on the extracellular side. The chain crosses the membrane as a helical span at residues 271–293 (IIGAAIAHVISQYFMTLILFVFL). The Cytoplasmic portion of the chain corresponds to 294–316 (AKKVNLIPPNFGDLQFGRFLKNG). Residues 317–337 (LLLLARTIAVTFCQTLAAAMA) traverse the membrane as a helical segment. Topologically, residues 338–353 (ARLGTTPMAAFQICLQ) are extracellular. A helical membrane pass occupies residues 354-374 (VWLTSSLLNDGLAVAGQAILA). Residues 375–396 (CSFAEKDYNKVTAVASRVLQMG) lie on the Cytoplasmic side of the membrane. A helical transmembrane segment spans residues 397-417 (FVLGLGLSVFVGLGLYFGAGV). The Extracellular segment spans residues 418–426 (FSKDPAVIH). Residues 427 to 447 (LMAIGIPFIAATQPINSLAFV) form a helical membrane-spanning segment. The Cytoplasmic portion of the chain corresponds to 448–457 (LDGVNFGASD). The helical transmembrane segment at 458 to 478 (FAYTAYSMVGVAAISIAAVIY) threads the bilayer. At 479–484 (MAKTNG) the chain is on the extracellular side. Residues 485-505 (FIGIWIALTIYMALRAITGIA) traverse the membrane as a helical segment. Topologically, residues 506-526 (RMATGTGPWRFLRGRSSSSSS) are cytoplasmic.

It belongs to the multi antimicrobial extrusion (MATE) (TC 2.A.66.1) family. Expressed in roots in the pericycle and cells internal to the pericycle and surrounding the vascular tissue. Also expressed in seed and flower.

Its subcellular location is the cell membrane. Citrate transporter responsible for loading citrate into xylem tissues, which helps facilitate iron transport to shoots. Mediates the citrate release in the apoplastic spaces during plant development allowing iron nutrition between symplastically disconnected tissues. This chain is Protein DETOXIFICATION 43, found in Arabidopsis thaliana (Mouse-ear cress).